The following is a 150-amino-acid chain: Large ribosomal subunit protein uL15 (150 aa).

Residues 1–55 (MADNEILQMHDLKPAPGAKKDRTRVGRGEGSKGKTSGRGAKGQTKRNHVRPGFEG) are disordered. Basic and acidic residues predominate over residues 8 to 32 (QMHDLKPAPGAKKDRTRVGRGEGSK).

Belongs to the universal ribosomal protein uL15 family. In terms of assembly, part of the 50S ribosomal subunit.

In terms of biological role, binds to the 23S rRNA. The protein is Large ribosomal subunit protein uL15 of Bifidobacterium longum (strain NCC 2705).